Consider the following 254-residue polypeptide: HTH-type transcriptional regulator GlvR (254 aa).

Residues 1-77 (MQLEELINQH…VFLKWEDQPE (77 aa)) form the HTH rpiR-type domain. Positions 37 to 56 (IDALAKACSVSRSSILRLAQ) form a DNA-binding region, H-T-H motif. Residues 106–248 (MCQLIDAADR…FRAYVDYKEA (143 aa)) enclose the SIS domain.

Functionally, positive regulator of the glv operon expression, which consists of GlvA, GlvR and GlvC. The chain is HTH-type transcriptional regulator GlvR (glvR) from Bacillus subtilis (strain 168).